Here is a 132-residue protein sequence, read N- to C-terminus: ATP synthase epsilon chain (132 aa).

The protein belongs to the ATPase epsilon chain family. In terms of assembly, F-type ATPases have 2 components, CF(1) - the catalytic core - and CF(0) - the membrane proton channel. CF(1) has five subunits: alpha(3), beta(3), gamma(1), delta(1), epsilon(1). CF(0) has three main subunits: a, b and c.

Its subcellular location is the cell inner membrane. Its function is as follows. Produces ATP from ADP in the presence of a proton gradient across the membrane. This chain is ATP synthase epsilon chain, found in Anaeromyxobacter sp. (strain Fw109-5).